The chain runs to 182 residues: Dirigent protein 1 (182 aa).

Residues 1-24 (MAKRFLLLLPLLSSILLLAVSVTA) form the signal peptide. N125 carries an N-linked (GlcNAc...) asparagine glycan.

It belongs to the plant dirigent protein family. In terms of assembly, homodimer.

The protein localises to the secreted. Its subcellular location is the extracellular space. It localises to the apoplast. Functionally, dirigent proteins impart stereoselectivity on the phenoxy radical-coupling reaction, yielding optically active lignans from two molecules of coniferyl alcohol in the biosynthesis of lignans, flavonolignans, and alkaloids and thus plays a central role in plant secondary metabolism. The protein is Dirigent protein 1 (DIR1) of Arabidopsis thaliana (Mouse-ear cress).